A 399-amino-acid chain; its full sequence is Nicotinate phosphoribosyltransferase (399 aa).

H217 is modified (phosphohistidine; by autocatalysis).

This sequence belongs to the NAPRTase family. Post-translationally, transiently phosphorylated on a His residue during the reaction cycle. Phosphorylation strongly increases the affinity for substrates and increases the rate of nicotinate D-ribonucleotide production. Dephosphorylation regenerates the low-affinity form of the enzyme, leading to product release.

The enzyme catalyses nicotinate + 5-phospho-alpha-D-ribose 1-diphosphate + ATP + H2O = nicotinate beta-D-ribonucleotide + ADP + phosphate + diphosphate. It participates in cofactor biosynthesis; NAD(+) biosynthesis; nicotinate D-ribonucleotide from nicotinate: step 1/1. Its function is as follows. Catalyzes the synthesis of beta-nicotinate D-ribonucleotide from nicotinate and 5-phospho-D-ribose 1-phosphate at the expense of ATP. The protein is Nicotinate phosphoribosyltransferase of Burkholderia orbicola (strain MC0-3).